We begin with the raw amino-acid sequence, 459 residues long: Argininosuccinate lyase (459 aa).

Belongs to the lyase 1 family. Argininosuccinate lyase subfamily.

Its subcellular location is the cytoplasm. It carries out the reaction 2-(N(omega)-L-arginino)succinate = fumarate + L-arginine. It participates in amino-acid biosynthesis; L-arginine biosynthesis; L-arginine from L-ornithine and carbamoyl phosphate: step 3/3. The chain is Argininosuccinate lyase from Geobacillus thermodenitrificans (strain NG80-2).